The sequence spans 367 residues: Small ribosomal subunit biogenesis GTPase RsgA (367 aa).

A CP-type G domain is found at 112–267; it reads AEQVLATNVD…VIDTPGLREL (156 aa). GTP is bound by residues 157-160 and 209-217; these read NKSD and GSSGAGKST. Positions 291, 296, 298, and 304 each coordinate Zn(2+).

The protein belongs to the TRAFAC class YlqF/YawG GTPase family. RsgA subfamily. Monomer. Associates with 30S ribosomal subunit, binds 16S rRNA. Zn(2+) is required as a cofactor.

Its subcellular location is the cytoplasm. Its function is as follows. One of several proteins that assist in the late maturation steps of the functional core of the 30S ribosomal subunit. Helps release RbfA from mature subunits. May play a role in the assembly of ribosomal proteins into the subunit. Circularly permuted GTPase that catalyzes slow GTP hydrolysis, GTPase activity is stimulated by the 30S ribosomal subunit. The chain is Small ribosomal subunit biogenesis GTPase RsgA from Opitutus terrae (strain DSM 11246 / JCM 15787 / PB90-1).